A 91-amino-acid polypeptide reads, in one-letter code: MAEEHVVYIGKKPVMNYVLAVITQFNEGAKEVSIRARGRAISRAVDVAEIVRNRFLPEVRVKEIKIGTEELPTADGRTANTSTIEIILEKP.

K11 is subject to N6-acetyllysine.

It belongs to the histone-like Alba family. Post-translationally, acetylated. Acetylation at Lys-11 decreases DNA-binding affinity.

The protein resides in the cytoplasm. Its subcellular location is the chromosome. Its function is as follows. Binds double-stranded DNA tightly but without sequence specificity. Incubation with DNA in vitro gives fibrous structures 10.3 +/- 1.1 nm in thickness (naked DNA is 1.83 +/- 0.37 nm). This protein does not significantly compact DNA. This Thermococcus kodakarensis (strain ATCC BAA-918 / JCM 12380 / KOD1) (Pyrococcus kodakaraensis (strain KOD1)) protein is DNA/RNA-binding protein Alba.